The chain runs to 323 residues: Probable cell division protein WhiA (323 aa).

Residues Thr275–Ser309 constitute a DNA-binding region (H-T-H motif).

The protein belongs to the WhiA family.

Functionally, involved in cell division and chromosome segregation. The polypeptide is Probable cell division protein WhiA (Listeria welshimeri serovar 6b (strain ATCC 35897 / DSM 20650 / CCUG 15529 / CIP 8149 / NCTC 11857 / SLCC 5334 / V8)).